A 638-amino-acid chain; its full sequence is Neuroendocrine convertase 2 (638 aa).

A signal peptide spans 1 to 25 (MRGGCISQGKAAAGLLFCVMVFASA). The propeptide occupies 26 to 109 (ERPVFTNHFL…QQEGFNRKKR (84 aa)). Positions 129 to 453 (QWYLINTGQA…YGVLDAGAMV (325 aa)) constitute a Peptidase S8 domain. Residues aspartate 167 and histidine 208 each act as charge relay system in the active site. 2 disulfides stabilise this stretch: cysteine 225–cysteine 376 and cysteine 317–cysteine 347. Residue asparagine 375 is glycosylated (N-linked (GlcNAc...) asparagine). Serine 384 (charge relay system) is an active-site residue. The P/Homo B domain maps to 461–597 (TVPERFHCVG…TLMLHGTQSA (137 aa)). An intrachain disulfide couples cysteine 468 to cysteine 494. 2 N-linked (GlcNAc...) asparagine glycosylation sites follow: asparagine 514 and asparagine 524.

This sequence belongs to the peptidase S8 family. Furin subfamily.

The protein resides in the cytoplasmic vesicle. It localises to the secretory vesicle. Its subcellular location is the secreted. The enzyme catalyses Release of protein hormones and neuropeptides from their precursors, generally by hydrolysis of -Lys-Arg-|- bonds.. Its function is as follows. Serine endopeptidase which is involved in the processing of hormone and other protein precursors at sites comprised of pairs of basic amino acid residues. Responsible for the release of glucagon from proglucagon in pancreatic A cells. In Bos taurus (Bovine), this protein is Neuroendocrine convertase 2 (PCSK2).